We begin with the raw amino-acid sequence, 236 residues long: Small ribosomal subunit protein eS6 (236 aa).

The protein belongs to the eukaryotic ribosomal protein eS6 family. Component of the small ribosomal subunit. Mature ribosomes consist of a small (40S) and a large (60S) subunit. The 40S subunit contains about 32 different proteins and 1 molecule of RNA (18S). The 60S subunit contains 45 different proteins and 3 molecules of RNA (25S, 5.8S and 5S).

The protein localises to the cytoplasm. Functionally, component of the ribosome, a large ribonucleoprotein complex responsible for the synthesis of proteins in the cell. The small ribosomal subunit (SSU) binds messenger RNAs (mRNAs) and translates the encoded message by selecting cognate aminoacyl-transfer RNA (tRNA) molecules. The large subunit (LSU) contains the ribosomal catalytic site termed the peptidyl transferase center (PTC), which catalyzes the formation of peptide bonds, thereby polymerizing the amino acids delivered by tRNAs into a polypeptide chain. The nascent polypeptides leave the ribosome through a tunnel in the LSU and interact with protein factors that function in enzymatic processing, targeting, and the membrane insertion of nascent chains at the exit of the ribosomal tunnel. RPS6A is involved in nucleolar processing of pre-18S ribosomal RNA and ribosome assembly. This Candida albicans (strain SC5314 / ATCC MYA-2876) (Yeast) protein is Small ribosomal subunit protein eS6 (RPS6A).